Consider the following 297-residue polypeptide: Syntaxin-4 (297 aa).

The segment covering 1–12 (MRDRTHELRQGD) has biased composition (basic and acidic residues). Positions 1–21 (MRDRTHELRQGDDSSDEEDKE) are disordered. Residues 1–275 (MRDRTHELRQ…QKKARKKKVL (275 aa)) lie on the Cytoplasmic side of the membrane. A phosphoserine mark is found at Ser-14 and Ser-15. Thr-31 is modified (phosphothreonine). 4 positions are modified to phosphoserine: Ser-36, Ser-117, Ser-208, and Ser-248. The stretch at 43 to 163 (HKVRTIRQTI…ERIRRQLKIT (121 aa)) forms a coiled coil. The tract at residues 154–297 (ERIRRQLKIT…AVIIGVTVVG (144 aa)) is interaction with CENPF. Positions 200-262 (LNEISARHSE…ERGQEHVKTA (63 aa)) constitute a t-SNARE coiled-coil homology domain. The chain crosses the membrane as a helical; Anchor for type IV membrane protein span at residues 276-296 (IAICVSITVVLLAVIIGVTVV). Residue Gly-297 is a topological domain, extracellular.

The protein belongs to the syntaxin family. In terms of assembly, component of the SNARE complex composed of STX4, SNAP23 and VAMP7 that interacts with SYT7 during lysosomal exocytosis. Found in a complex with VAMP8 and SNAP23. Detected in a complex with SNAP23 and STXBP4. Interacts with VAMP2. Interacts with SNAP23 and SNAPIN. Interacts with LLGL1. Interacts (via C-terminus) with CENPF. Interacts with DOC2B. Interacts with STXBP6. Interacts with STXBP3; excludes interaction with DOC2B and SNAP25. Interacts with STXBP4; excludes interaction with VAMP2. Interacts with STXBP5L. As to expression, expressed in neutrophils and neutrophil-differentiated HL-60 cells. Expression in neutrophils increases with differentiation.

Its subcellular location is the cell membrane. It localises to the cell projection. It is found in the neuron projection. The protein localises to the stereocilium. Plasma membrane t-SNARE that mediates docking of transport vesicles. Necessary for the translocation of SLC2A4 from intracellular vesicles to the plasma membrane. In neurons, recruited at neurite tips to membrane domains rich in the phospholipid 1-oleoyl-2-palmitoyl-PC (OPPC) which promotes neurite tip surface expression of the dopamine transporter SLC6A3/DAT by facilitating fusion of SLC6A3-containing transport vesicles with the plasma membrane. Together with STXB3 and VAMP2, may also play a role in docking/fusion of intracellular GLUT4-containing vesicles with the cell surface in adipocytes and in docking of synaptic vesicles at presynaptic active zones. Required for normal hearing. The polypeptide is Syntaxin-4 (STX4) (Homo sapiens (Human)).